The following is a 156-amino-acid chain: MPKGSGKVLSQNKKANHDYFIEETYETGIVLQGTEIKSIRAGRVNLKDSFAKIERGEVFLHNMHVSPYEQGNRYNHDPLRTRKLLMHRKEINKLIGLTKEKGYSLVPLKLYLKNGFAKVLLGLGKGKKNYDKREDLKRKDAKREIERAFRDSQKGF.

Belongs to the SmpB family.

The protein localises to the cytoplasm. Its function is as follows. Required for rescue of stalled ribosomes mediated by trans-translation. Binds to transfer-messenger RNA (tmRNA), required for stable association of tmRNA with ribosomes. tmRNA and SmpB together mimic tRNA shape, replacing the anticodon stem-loop with SmpB. tmRNA is encoded by the ssrA gene; the 2 termini fold to resemble tRNA(Ala) and it encodes a 'tag peptide', a short internal open reading frame. During trans-translation Ala-aminoacylated tmRNA acts like a tRNA, entering the A-site of stalled ribosomes, displacing the stalled mRNA. The ribosome then switches to translate the ORF on the tmRNA; the nascent peptide is terminated with the 'tag peptide' encoded by the tmRNA and targeted for degradation. The ribosome is freed to recommence translation, which seems to be the essential function of trans-translation. Required for trans-translation. Probably required for sporulation; deletion of the gene for tmRNA impairs sporulation via its effect on trans-translation, and as smpB is required for trans-translation under non-stress conditions, it is also probably required during sporulation. This Bacillus subtilis (strain 168) protein is SsrA-binding protein.